The primary structure comprises 87 residues: Small ribosomal subunit protein uS17 (87 aa).

Belongs to the universal ribosomal protein uS17 family. As to quaternary structure, part of the 30S ribosomal subunit.

Its function is as follows. One of the primary rRNA binding proteins, it binds specifically to the 5'-end of 16S ribosomal RNA. This chain is Small ribosomal subunit protein uS17, found in Geobacillus stearothermophilus (Bacillus stearothermophilus).